Reading from the N-terminus, the 302-residue chain is Segregation and condensation protein A (302 aa).

The protein belongs to the ScpA family. Component of a cohesin-like complex composed of ScpA, ScpB and the Smc homodimer, in which ScpA and ScpB bind to the head domain of Smc. The presence of the three proteins is required for the association of the complex with DNA.

The protein localises to the cytoplasm. Its function is as follows. Participates in chromosomal partition during cell division. May act via the formation of a condensin-like complex containing Smc and ScpB that pull DNA away from mid-cell into both cell halves. The protein is Segregation and condensation protein A of Xylella fastidiosa (strain 9a5c).